The following is a 161-amino-acid chain: MTSIRIGNGYDIHRLVSDRPLILGGVNIPHELGLLGHSDADVLTHAIMDALLGALSLGDIGHYFPPGDPQWAGADSLKLLAQVHQLVQERGWQVGNIDSVIVAERPKLKPHLAAMRDRLSAVLKVKPDQIGIKATTNEKLGPEGREEGICAYAVAVLVSVA.

Residues aspartate 11 and histidine 13 each contribute to the a divalent metal cation site. 4-CDP-2-C-methyl-D-erythritol 2-phosphate is bound by residues 11 to 13 and 37 to 38; these read DIH and HS. Residue histidine 45 participates in a divalent metal cation binding. Residues 59-61, 135-138, and arginine 145 contribute to the 4-CDP-2-C-methyl-D-erythritol 2-phosphate site; these read DIG and TTNE.

This sequence belongs to the IspF family. As to quaternary structure, homotrimer. Requires a divalent metal cation as cofactor.

The catalysed reaction is 4-CDP-2-C-methyl-D-erythritol 2-phosphate = 2-C-methyl-D-erythritol 2,4-cyclic diphosphate + CMP. The protein operates within isoprenoid biosynthesis; isopentenyl diphosphate biosynthesis via DXP pathway; isopentenyl diphosphate from 1-deoxy-D-xylulose 5-phosphate: step 4/6. Functionally, involved in the biosynthesis of isopentenyl diphosphate (IPP) and dimethylallyl diphosphate (DMAPP), two major building blocks of isoprenoid compounds. Catalyzes the conversion of 4-diphosphocytidyl-2-C-methyl-D-erythritol 2-phosphate (CDP-ME2P) to 2-C-methyl-D-erythritol 2,4-cyclodiphosphate (ME-CPP) with a corresponding release of cytidine 5-monophosphate (CMP). The protein is 2-C-methyl-D-erythritol 2,4-cyclodiphosphate synthase of Cyanothece sp. (strain PCC 7425 / ATCC 29141).